Reading from the N-terminus, the 508-residue chain is Cytochrome P450 monooxygenase tenA (508 aa).

A helical transmembrane segment spans residues 8–24; the sequence is VSLPYLILSACLSVILL. A heme-binding site is contributed by C456.

The protein belongs to the cytochrome P450 family. Heme serves as cofactor.

It is found in the membrane. Its pathway is secondary metabolite biosynthesis. In terms of biological role, cytochrome P450 monooxygenase; part of the gene cluster that mediates the biosynthesis of tenellin-type 2-pyridones, iron-chelating compounds involved in iron stress tolerance, competition with the natural competitor fungus Metarhizium robertsii and insect hosts infection. TenA catalyzes an oxidative ring expansion of pretenellin A and 14-hydropretellenin A to form the 2-pyridone core, leading to the production of pretenellin B and pyridovericin, respectively. The pathway begins with the assembly of the polyketide-amino acid backbone by the hybrid PKS-NRPS tenS with the help of the enoyl reductase tenC. These enzymes catalyze the synthesis of the pyrrolidine-2-dione intermediates pretellinin A, 11-hydropretellenin A, 12-hydropretellenin A, 13-hydropretellenin A, 14-hydropretellenin A, 12-oxopretellenin A and prototellinin D. The cytochrome P450 monooxygenase tenA then catalyzes an oxidative ring expansion of pretenellin A and 14-hydropretellenin A to form the 2-pyridone core, leading to pretenellin B and pyridovericin, respectively. The cytochrome P450 monooxygenase tenB is then required for the selective N-hydroxylation of the 2-pyridone nitrogen of yield tellinin and 15-hydroxytellenin (15-HT), respectively. The UDP-glucosyltransferase GT1 and the methyltransferase MT1, located outside the tenS gene cluster, contribute to the stepwise glycosylation and methylation of 15-HT to obtain the glycoside pyridovericin-N-O-(4-O-methyl-beta-D-glucopyranoside) (PMGP). Additional related compounds such as 1-O-methyl-15-HT, (8Z)-1-O-methyl-15-HT, and O-methyltenellin A are also produced but the enzymes involved in their biosynthesis have still to be determined. This Beauveria bassiana (White muscardine disease fungus) protein is Cytochrome P450 monooxygenase tenA.